A 604-amino-acid polypeptide reads, in one-letter code: Protein CBFA2T1 (604 aa).

Positions 32 to 114 (TEKHSTMPDS…SSSSLANQQL (83 aa)) are disordered. Residue serine 41 is modified to Phosphoserine. The segment covering 63–86 (QGAPRTSSFTPTTLTNGTSHSPTA) has biased composition (polar residues). Positions 95-114 (NGFSNGPSSSSSSSLANQQL) are enriched in low complexity. The TAFH domain occupies 120 to 215 (ARQLSKLKRF…NPAQYLAQHE (96 aa)). The tract at residues 230–298 (SELLLDVNEN…LPHPTPPPPQ (69 aa)) is disordered. Residues 238–264 (ENGKRRTPDRTKENGFDREPLHSEHPS) are compositionally biased toward basic and acidic residues. The span at 271–285 (SPGQRYSPNNGLSYQ) shows a compositional bias: polar residues. Pro residues predominate over residues 289-298 (LPHPTPPPPQ). Positions 337–383 (QEEMIDHRLTDREWAEEWKHLDHLLNCIMDMVEKTRRSLTVLRRCQE) are important for oligomerization. Residues 337–383 (QEEMIDHRLTDREWAEEWKHLDHLLNCIMDMVEKTRRSLTVLRRCQE) are nervy homology region 2 (NHR2). The interval 401 to 423 (DLKKGGGSSSSHSRQQSPVNPDP) is disordered. Phosphoserine is present on serine 417. The segment at 443-492 (EEIWKKAEEAVNEVKRQAMTELQKAVSEAERKAHDMITTERAKMERTVAE) is nervy homology region 3 (NHR3). Cysteine 515, cysteine 518, cysteine 526, cysteine 529, cysteine 535, cysteine 539, histidine 547, and cysteine 551 together coordinate Zn(2+). The segment at 515–551 (CWNCGRKASETCSGCNTARYCGSFCQHKDWEKHHHIC) adopts an MYND-type zinc-finger fold. Polar residues predominate over residues 557–576 (AQQQGDTPAVSSSVTPNSGA). The interval 557–604 (AQQQGDTPAVSSSVTPNSGAGSPMDTPPAATPRSTTPGTPSTIETTPR) is disordered. A compositionally biased stretch (low complexity) spans 587 to 604 (TPRSTTPGTPSTIETTPR).

It belongs to the CBFA2T family. In terms of assembly, homooligomer. Homotetramerization is mediated by nervy homology region 2 (NRH2). Can interact with CBFA2T2 and CBFA2T3; heterotetramerization between members of the CBFA2T family is proposed. Interacts with TCF12, SIN3A, HDAC1, HDAC2, HDAC3, NCOR1, NCOR2. Interacts with ATN1 (via its N-terminus); the interaction enhances the transcriptional repression. Interacts (via its N-terminus) with ZBTB16; the interaction increases the transcription repression activity of ZBTB16. AML1-MTG8/ETO fusion protein interacts with CBFB. AML1-MTG8/ETO is part of a stable transcription factor complex AETFC in leukemic cells; AETFC formation seems to be involved in recruitment of EP300. AML1-MTG8/ETO nervy homology region 2-mediated oligomerization is proposed to be homotypic, required for AML1-MTG8/ETO-mediated transformation of primary hematopoietic cells and is required for AML1-MTG8/ETO interaction with TCF12. Most abundantly expressed in brain. Lower levels in lung, heart, testis and ovary.

Its subcellular location is the nucleus. Transcriptional corepressor which facilitates transcriptional repression via its association with DNA-binding transcription factors and recruitment of other corepressors and histone-modifying enzymes. Can repress the expression of MMP7 in a ZBTB33-dependent manner. Can repress transactivation mediated by TCF12. Acts as a negative regulator of adipogenesis. The AML1-MTG8/ETO fusion protein frequently found in leukemic cells is involved in leukemogenesis and contributes to hematopoietic stem/progenitor cell self-renewal. The sequence is that of Protein CBFA2T1 (RUNX1T1) from Homo sapiens (Human).